Consider the following 155-residue polypeptide: Endoribonuclease YbeY (155 aa).

Zn(2+) is bound by residues His-120, His-124, and His-130.

This sequence belongs to the endoribonuclease YbeY family. Requires Zn(2+) as cofactor.

Its subcellular location is the cytoplasm. Functionally, single strand-specific metallo-endoribonuclease involved in late-stage 70S ribosome quality control and in maturation of the 3' terminus of the 16S rRNA. In Staphylococcus epidermidis (strain ATCC 12228 / FDA PCI 1200), this protein is Endoribonuclease YbeY.